The following is a 277-amino-acid chain: 3-methyl-2-oxobutanoate hydroxymethyltransferase (277 aa).

The Mg(2+) site is built by Asp53 and Asp96. Residues 53–54 (DS), Asp96, and Lys126 contribute to the 3-methyl-2-oxobutanoate site. Position 128 (Glu128) interacts with Mg(2+). Glu195 serves as the catalytic Proton acceptor.

The protein belongs to the PanB family. As to quaternary structure, homodecamer; pentamer of dimers. Requires Mg(2+) as cofactor.

It localises to the cytoplasm. It catalyses the reaction 3-methyl-2-oxobutanoate + (6R)-5,10-methylene-5,6,7,8-tetrahydrofolate + H2O = 2-dehydropantoate + (6S)-5,6,7,8-tetrahydrofolate. It functions in the pathway cofactor biosynthesis; (R)-pantothenate biosynthesis; (R)-pantoate from 3-methyl-2-oxobutanoate: step 1/2. Catalyzes the reversible reaction in which hydroxymethyl group from 5,10-methylenetetrahydrofolate is transferred onto alpha-ketoisovalerate to form ketopantoate. This Prosthecochloris aestuarii (strain DSM 271 / SK 413) protein is 3-methyl-2-oxobutanoate hydroxymethyltransferase.